The chain runs to 27 residues: Metalloproteinase inhibitor 1 (27 aa).

Residues 1-12 (IEPERQEEEEEE) are compositionally biased toward acidic residues. The disordered stretch occupies residues 1-27 (IEPERQEEEEEETRQRVRRGQVRQQQQ).

In terms of biological role, metalloproteinase inhibitor, active on a globulinase from L.albus seeds, thermolysin and gelatinase B. The sequence is that of Metalloproteinase inhibitor 1 from Lupinus albus (White lupine).